Reading from the N-terminus, the 427-residue chain is L-rhamnose isomerase (427 aa).

Residues His-264, Asp-296, and Asp-298 each contribute to the Mn(2+) site.

Belongs to the rhamnose isomerase family. It depends on Mn(2+) as a cofactor.

The protein localises to the cytoplasm. It carries out the reaction L-rhamnopyranose = L-rhamnulose. It participates in carbohydrate degradation; L-rhamnose degradation; glycerone phosphate from L-rhamnose: step 1/3. In terms of biological role, catalyzes the interconversion of L-rhamnose and L-rhamnulose. The polypeptide is L-rhamnose isomerase (Lactiplantibacillus plantarum (strain ATCC BAA-793 / NCIMB 8826 / WCFS1) (Lactobacillus plantarum)).